The chain runs to 484 residues: Glycogen synthase (484 aa).

Lysine 15 provides a ligand contact to ADP-alpha-D-glucose.

This sequence belongs to the glycosyltransferase 1 family. Bacterial/plant glycogen synthase subfamily.

It catalyses the reaction [(1-&gt;4)-alpha-D-glucosyl](n) + ADP-alpha-D-glucose = [(1-&gt;4)-alpha-D-glucosyl](n+1) + ADP + H(+). It functions in the pathway glycan biosynthesis; glycogen biosynthesis. In terms of biological role, synthesizes alpha-1,4-glucan chains using ADP-glucose. The chain is Glycogen synthase from Bacillus licheniformis (strain ATCC 14580 / DSM 13 / JCM 2505 / CCUG 7422 / NBRC 12200 / NCIMB 9375 / NCTC 10341 / NRRL NRS-1264 / Gibson 46).